Here is a 420-residue protein sequence, read N- to C-terminus: Gamma-glutamyl phosphate reductase (420 aa).

This sequence belongs to the gamma-glutamyl phosphate reductase family.

The protein localises to the cytoplasm. The enzyme catalyses L-glutamate 5-semialdehyde + phosphate + NADP(+) = L-glutamyl 5-phosphate + NADPH + H(+). It functions in the pathway amino-acid biosynthesis; L-proline biosynthesis; L-glutamate 5-semialdehyde from L-glutamate: step 2/2. In terms of biological role, catalyzes the NADPH-dependent reduction of L-glutamate 5-phosphate into L-glutamate 5-semialdehyde and phosphate. The product spontaneously undergoes cyclization to form 1-pyrroline-5-carboxylate. The chain is Gamma-glutamyl phosphate reductase from Neisseria meningitidis serogroup A / serotype 4A (strain DSM 15465 / Z2491).